The sequence spans 353 residues: Ubiquinol oxidase 2, mitochondrial (353 aa).

The N-terminal 21 residues, methionine 1–cysteine 21, are a transit peptide targeting the mitochondrion. A helical membrane pass occupies residues alanine 178 to leucine 198. Fe cation is bound by residues glutamate 182, glutamate 221, and histidine 224. The chain crosses the membrane as a helical span at residues leucine 240–serine 260. Fe cation contacts are provided by glutamate 272, glutamate 323, and histidine 326.

Belongs to the alternative oxidase family. Homodimer; disulfide-linked. Fe cation is required as a cofactor. As to expression, maximally expressed in dry seeds. Detected in roots, stems and leaves.

The protein localises to the mitochondrion inner membrane. It carries out the reaction 2 a ubiquinol + O2 = 2 a ubiquinone + 2 H2O. Its function is as follows. Catalyzes the cyanide-resistant oxidation of ubiquinol and the reduction of molecular oxygen to water, but does not translocate protons and consequently is not linked to oxidative phosphorylation. May increase respiration when the cytochrome respiratory pathway is restricted, or in response to low temperatures. The chain is Ubiquinol oxidase 2, mitochondrial (AOX2) from Arabidopsis thaliana (Mouse-ear cress).